The following is a 397-amino-acid chain: Phosphoglycerate kinase (397 aa).

Substrate is bound by residues 25 to 27, Arg41, 64 to 67, Arg118, and Arg151; these read DLN and HLGR. ATP is bound by residues Lys202, Glu324, and 350 to 353; that span reads GGDT.

The protein belongs to the phosphoglycerate kinase family. In terms of assembly, monomer.

The protein resides in the cytoplasm. The enzyme catalyses (2R)-3-phosphoglycerate + ATP = (2R)-3-phospho-glyceroyl phosphate + ADP. It functions in the pathway carbohydrate degradation; glycolysis; pyruvate from D-glyceraldehyde 3-phosphate: step 2/5. This is Phosphoglycerate kinase from Janthinobacterium sp. (strain Marseille) (Minibacterium massiliensis).